A 134-amino-acid chain; its full sequence is MSDIPSDLHYTAEHEWIRRSGDDTVRVGITDYAQSALGDVVFVQLPVIGTAVTAGETFGEVESTKSVSDLYAPISGKVSAVNSDLDGTPQLVNSDPYGAGWLLDIQVDSSDVAALESALTTLLDAEAYRGTLTE.

Residues 24–106 (TVRVGITDYA…YGAGWLLDIQ (83 aa)) enclose the Lipoyl-binding domain. Lys65 carries the post-translational modification N6-lipoyllysine.

The protein belongs to the GcvH family. As to quaternary structure, the glycine cleavage system is composed of four proteins: P, T, L and H. Requires (R)-lipoate as cofactor.

In terms of biological role, the glycine cleavage system catalyzes the degradation of glycine. The H protein shuttles the methylamine group of glycine from the P protein to the T protein. The protein is Glycine cleavage system H protein of Mycobacterium bovis (strain ATCC BAA-935 / AF2122/97).